The following is a 474-amino-acid chain: uncharacterized protein (474 aa).

A helical transmembrane segment spans residues 3–23 (LTLWLVLGAVGVGAVGTGVGF). The interval 171 to 296 (VSDGSSSKTR…KETKDRTKVD (126 aa)) is disordered. Positions 180–210 (RTPKKTKTSKKKPIKKKSSKSKSSKGSKKQK) are enriched in basic residues. Residues 231–253 (TRSQSKQQKGQEQATDQTDSEGV) are compositionally biased toward polar residues. Residues 257–266 (EGADNTDTEL) are compositionally biased toward acidic residues. Residues 267-281 (VETTAETTEQEATTK) are compositionally biased toward low complexity. The segment covering 282 to 296 (STKDTKETKDRTKVD) has biased composition (basic and acidic residues).

The protein resides in the membrane. This is an uncharacterized protein from Mycoplasma pneumoniae (strain ATCC 29342 / M129 / Subtype 1) (Mycoplasmoides pneumoniae).